Consider the following 842-residue polypeptide: MTWTHLPLGNKTSRFTQSALALMIAGTLPAYAGTFNPRFLEDVPGIDQHVDLSMYESNKAEHLPGKYRVSVVVNEKKMESRTLEFKAATEAQRAKMGESLVPCLSRVQLEDMGVRIDSFPALKMAPPEACVAFDDIIPQAASHFDFADQTLIMSFPQAAMKQTARGTVPESQWDEGVNALLVDYNFSGSNASYDAHDSETSYNSDSYYLNLRSGMNLGAWRLRNYSTWTRNDGNNTWDNIGTSLSRAIVPLKSQLTLGDTSTAGDIFDSVQMRGVQLTSDEEMLPDSQRGFAPVIRGIAKSNAEVTVEQNNYVIYRTFVQPGAFEINDLYPTSNSGDLTVTIKESDGSEQKFVQPFSSVALLQREGHLKYSLSAGEYRAGNYNSAEPKFGQLDAMYGLPYGFTVYGGAIFSDDYYSLAGGLGKNFGYIGAISIDVTQAKSKLANEENSEGQSYRFLYSKSFNSGTDFRLLGYKYSTSGYYTFQEATDVRSDADSSYSQYHKRSQIQGNVTQQLGAWGSVYFNVTQQDYWNDEGKQRSLNAGYNGRIGRVNYSVAYTWTKSPEWDESDRLLSFSMSIPLGRVWSNYHLTTDQHGRTNQQLGVSGTALEDHNLNYSVQEGYGSNGVGNSGSVNLDYQGGVGSASLGYNYNRDGQQVNYGLRGGVIAHSEGITLSQPLGESMAIISAPGARGAHVINNGGVEVDWMGNAVVPYLTPYRETEVSLRSDSLNNQVDLDTASVNVVPTRGAIVRARFDTRVGYRVLMNLTQANGKAVPFGATATLLDTTKESSSIVGEDGQLYISGMPEKGALQVNWGKDQAQQCRVAFTLPEQQDNTGVVMANAVCR.

Residues 1-21 (MTWTHLPLGNKTSRFTQSALA) form the signal peptide. A disulfide bond links C819 and C841.

The protein belongs to the fimbrial export usher family.

The protein resides in the cell outer membrane. In terms of biological role, involved in the export and assembly of LpfA fimbrial subunits across the outer membrane. This Salmonella typhimurium (strain LT2 / SGSC1412 / ATCC 700720) protein is Outer membrane usher protein LpfC (lpfC).